Reading from the N-terminus, the 398-residue chain is Argininosuccinate synthase (398 aa).

Residue 8-16 (AYSGGLDTS) coordinates ATP. Tyr87 serves as a coordination point for L-citrulline. ATP is bound at residue Gly117. Thr119, Asn123, and Asp124 together coordinate L-aspartate. Position 123 (Asn123) interacts with L-citrulline. The L-citrulline site is built by Arg127, Ser175, Glu260, and Tyr272.

Belongs to the argininosuccinate synthase family. Type 1 subfamily. Homotetramer.

The protein localises to the cytoplasm. It carries out the reaction L-citrulline + L-aspartate + ATP = 2-(N(omega)-L-arginino)succinate + AMP + diphosphate + H(+). It functions in the pathway amino-acid biosynthesis; L-arginine biosynthesis; L-arginine from L-ornithine and carbamoyl phosphate: step 2/3. This Mycobacterium avium (strain 104) protein is Argininosuccinate synthase.